The sequence spans 233 residues: Apoptosis regulator Bcl-2 (233 aa).

The BH4 motif lies at 10-30 (DNREIVLKYIHYKLSQRGYDW). The tract at residues 32–86 (AGEDRPPVPPAPAPAAAPAAVAAAGASSHHRPEPPGSAAASEVPPAEGLRPAPPG) is disordered. The BH3 motif lies at 87–101 (VHLALRQAGDEFSRR). The short motif at 130 to 149 (ELFRDGVNWGRIVAFFEFGG) is the BH1 element. A BH2 motif is present at residues 181 to 196 (NWIQDNGGWDAFVELY). A helical membrane pass occupies residues 208–228 (WISLKTILSLVLVGACITLGA).

It belongs to the Bcl-2 family. As to quaternary structure, forms homodimers, and heterodimers with BAX, BAD, BAK and Bcl-X(L). Heterodimerization with BAX requires intact BH1 and BH2 motifs, and is necessary for anti-apoptotic activity. Also interacts with APAF1 and RAF-1. In terms of tissue distribution, in adult chicken expressed, in thymus, spleen, kidney, heart, ovary and brain, with the highest levels in the thymus. In the embryo, highly levels expressed in all tissues with high levels in the bursa of Fabricius.

The protein localises to the mitochondrion outer membrane. Its subcellular location is the nucleus membrane. The protein resides in the endoplasmic reticulum membrane. It is found in the cytoplasm. Functionally, suppresses apoptosis in a variety of cell systems including factor-dependent lymphohematopoietic and neural cells. Regulates cell death by controlling the mitochondrial membrane permeability. Appears to function in a feedback loop system with caspases. Inhibits caspase activity either by preventing the release of cytochrome c from the mitochondria and/or by binding to the apoptosis-activating factor (APAF-1). The polypeptide is Apoptosis regulator Bcl-2 (BCL2) (Gallus gallus (Chicken)).